A 270-amino-acid polypeptide reads, in one-letter code: Regulatory protein RecX (270 aa).

Belongs to the RecX family.

It is found in the cytoplasm. Modulates RecA activity. The chain is Regulatory protein RecX from Bacillus cereus (strain B4264).